The primary structure comprises 433 residues: ATP-dependent protease ATPase subunit HslU (433 aa).

Residues V18, 60–65 (GVGKTE), D246, E311, and R383 each bind ATP.

The protein belongs to the ClpX chaperone family. HslU subfamily. A double ring-shaped homohexamer of HslV is capped on each side by a ring-shaped HslU homohexamer. The assembly of the HslU/HslV complex is dependent on binding of ATP.

It localises to the cytoplasm. ATPase subunit of a proteasome-like degradation complex; this subunit has chaperone activity. The binding of ATP and its subsequent hydrolysis by HslU are essential for unfolding of protein substrates subsequently hydrolyzed by HslV. HslU recognizes the N-terminal part of its protein substrates and unfolds these before they are guided to HslV for hydrolysis. This Rhodopseudomonas palustris (strain ATCC BAA-98 / CGA009) protein is ATP-dependent protease ATPase subunit HslU.